Here is a 283-residue protein sequence, read N- to C-terminus: 4-hydroxybenzoate octaprenyltransferase (283 aa).

The next 9 membrane-spanning stretches (helical) occupy residues 16–36 (PIGT…AGAG), 40–60 (LRIV…GCVI), 85–105 (ISAT…FGLV), 108–128 (LNTE…LYPF), 135–155 (LPQI…FTAL), 160–180 (WFIA…YDTE), 204–224 (FDRL…GWIL), 226–246 (LITV…LFAY), and 263–283 (FLHN…HYWF).

This sequence belongs to the UbiA prenyltransferase family. The cofactor is Mg(2+).

The protein localises to the cell inner membrane. The enzyme catalyses all-trans-octaprenyl diphosphate + 4-hydroxybenzoate = 4-hydroxy-3-(all-trans-octaprenyl)benzoate + diphosphate. It participates in cofactor biosynthesis; ubiquinone biosynthesis. In terms of biological role, catalyzes the prenylation of para-hydroxybenzoate (PHB) with an all-trans polyprenyl group. Mediates the second step in the final reaction sequence of ubiquinone-8 (UQ-8) biosynthesis, which is the condensation of the polyisoprenoid side chain with PHB, generating the first membrane-bound Q intermediate 3-octaprenyl-4-hydroxybenzoate. The sequence is that of 4-hydroxybenzoate octaprenyltransferase from Idiomarina loihiensis (strain ATCC BAA-735 / DSM 15497 / L2-TR).